Here is a 387-residue protein sequence, read N- to C-terminus: Monomeric sarcosine oxidase (387 aa).

An FAD-binding site is contributed by 6-36 (DVIVVGAGSMGMAAGYYLAKQGVKTLLVDSF). Cys-316 is subject to S-8alpha-FAD cysteine.

Belongs to the MSOX/MTOX family. MSOX subfamily. In terms of assembly, monomer. Requires FAD as cofactor.

It is found in the cytoplasm. The enzyme catalyses sarcosine + O2 + H2O = formaldehyde + glycine + H2O2. Functionally, catalyzes the oxidative demethylation of sarcosine. The sequence is that of Monomeric sarcosine oxidase (soxA) from Bacillus sp. (strain NS-129).